Here is a 388-residue protein sequence, read N- to C-terminus: G2/mitotic-specific cyclin-B2 (388 aa).

The disordered stretch occupies residues 46–67 (ATNGKVGPSKKPSKASCVQKPK).

It belongs to the cyclin family. Cyclin AB subfamily. As to quaternary structure, interacts with the CDK1 protein kinase to form a serine/threonine kinase holoenzyme complex also known as maturation promoting factor (MPF). The cyclin subunit imparts substrate specificity to the complex.

Essential for the control of the cell cycle at the G2/M (mitosis) transition. This is G2/mitotic-specific cyclin-B2 (ccnb2) from Oryzias curvinotus (Hynann ricefish).